A 344-amino-acid chain; its full sequence is Dimethyladenosine transferase 1, mitochondrial (344 aa).

The transit peptide at 1–27 directs the protein to the mitochondrion; that stretch reads MATPGALAKFRLPPLPTIGEIVKLFNL. Asn-36, Leu-38, Gly-63, Glu-85, Lys-86, Asp-111, Ile-112, and Asn-141 together coordinate S-adenosyl-L-methionine.

The protein belongs to the class I-like SAM-binding methyltransferase superfamily. rRNA adenine N(6)-methyltransferase family. KsgA subfamily.

The protein resides in the mitochondrion. The enzyme catalyses adenosine(N)/adenosine(N+1) in rRNA + 4 S-adenosyl-L-methionine = N(6)-dimethyladenosine(N)/N(6)-dimethyladenosine(N+1) in rRNA + 4 S-adenosyl-L-homocysteine + 4 H(+). In terms of biological role, mitochondrial methyltransferase which uses S-adenosyl methionine to dimethylate two highly conserved adjacent adenosine residues (A1583 and A1584) within the loop of helix 45 at the 3-prime end of 12S rRNA, thereby regulating the assembly or stability of the small subunit of the mitochondrial ribosome. Also required for basal transcription of mitochondrial DNA, probably via its interaction with POLRMT and TFAM. Stimulates transcription independently of the methyltransferase activity. The sequence is that of Dimethyladenosine transferase 1, mitochondrial (tfb1m.L) from Xenopus laevis (African clawed frog).